The following is a 141-amino-acid chain: Nucleoside diphosphate kinase (141 aa).

K11, F59, R87, T93, R104, and N114 together coordinate ATP. H117 (pros-phosphohistidine intermediate) is an active-site residue.

The protein belongs to the NDK family. Homotetramer. The cofactor is Mg(2+).

The protein localises to the cytoplasm. It carries out the reaction a 2'-deoxyribonucleoside 5'-diphosphate + ATP = a 2'-deoxyribonucleoside 5'-triphosphate + ADP. The enzyme catalyses a ribonucleoside 5'-diphosphate + ATP = a ribonucleoside 5'-triphosphate + ADP. Functionally, major role in the synthesis of nucleoside triphosphates other than ATP. The ATP gamma phosphate is transferred to the NDP beta phosphate via a ping-pong mechanism, using a phosphorylated active-site intermediate. This is Nucleoside diphosphate kinase from Polaromonas naphthalenivorans (strain CJ2).